The following is a 272-amino-acid chain: Phosphatidylglycerol--prolipoprotein diacylglyceryl transferase (272 aa).

4 consecutive transmembrane segments (helical) span residues 15-35 (LGPLYVHMYSVFMLAGALVLF), 53-73 (AFAVTSLLIPVILGARLWHVV), 90-110 (IWEGGLGFIGGVFSGLICFFV), and 117-137 (VPPFTFLDALAPGILAALCFA). Position 138 (Arg-138) interacts with a 1,2-diacyl-sn-glycero-3-phospho-(1'-sn-glycerol). Transmembrane regions (helical) follow at residues 174–194 (FHPIFLYEIILNVFIIVILLV), 199–219 (VFVKTVFPKGSVFAAFLVLYG), and 237–257 (FGLDLNYVGAAAMIIVGVLIA).

Belongs to the Lgt family.

It localises to the cell membrane. The enzyme catalyses L-cysteinyl-[prolipoprotein] + a 1,2-diacyl-sn-glycero-3-phospho-(1'-sn-glycerol) = an S-1,2-diacyl-sn-glyceryl-L-cysteinyl-[prolipoprotein] + sn-glycerol 1-phosphate + H(+). It participates in protein modification; lipoprotein biosynthesis (diacylglyceryl transfer). In terms of biological role, catalyzes the transfer of the diacylglyceryl group from phosphatidylglycerol to the sulfhydryl group of the N-terminal cysteine of a prolipoprotein, the first step in the formation of mature lipoproteins. The polypeptide is Phosphatidylglycerol--prolipoprotein diacylglyceryl transferase (Tropheryma whipplei (strain Twist) (Whipple's bacillus)).